Reading from the N-terminus, the 284-residue chain is Nucleotide-binding protein in ptsO 5'region (284 aa).

Gly-8–Ser-15 lines the ATP pocket. Residue Asp-60–Asn-63 coordinates GTP.

It belongs to the RapZ-like family.

In terms of biological role, displays ATPase and GTPase activities. This chain is Nucleotide-binding protein in ptsO 5'region, found in Pseudomonas putida (Arthrobacter siderocapsulatus).